We begin with the raw amino-acid sequence, 697 residues long: Potassium-transporting ATPase ATP-binding subunit (697 aa).

A run of 4 helical transmembrane segments spans residues 55–75 (PIMF…FLPS), 79–99 (SIPG…VLFA), 245–265 (LTLI…YLGF), and 271–291 (VLVA…LSAI). D324 functions as the 4-aspartylphosphate intermediate in the catalytic mechanism. ATP-binding positions include D361, E365, 393–400 (FKAETRMS), and K412. Residues D535 and D539 each coordinate Mg(2+). 3 helical membrane passes run 605–625 (FAII…LNIM), 633–653 (AILS…PLAM), and 677–697 (GGVI…GLFI).

This sequence belongs to the cation transport ATPase (P-type) (TC 3.A.3) family. Type IA subfamily. The system is composed of three essential subunits: KdpA, KdpB and KdpC.

The protein localises to the cell membrane. It catalyses the reaction K(+)(out) + ATP + H2O = K(+)(in) + ADP + phosphate + H(+). Functionally, part of the high-affinity ATP-driven potassium transport (or Kdp) system, which catalyzes the hydrolysis of ATP coupled with the electrogenic transport of potassium into the cytoplasm. This subunit is responsible for energy coupling to the transport system and for the release of the potassium ions to the cytoplasm. This is Potassium-transporting ATPase ATP-binding subunit from Bacillus cereus (strain ATCC 14579 / DSM 31 / CCUG 7414 / JCM 2152 / NBRC 15305 / NCIMB 9373 / NCTC 2599 / NRRL B-3711).